Consider the following 243-residue polypeptide: NAD-dependent protein deacetylase (243 aa).

A Deacetylase sirtuin-type domain is found at Met-1 to Glu-243. The NAD(+) site is built by Ala-24, Phe-35, Arg-36, Gln-105, Ile-107, Asp-108, and His-123. Residue Phe-35 coordinates nicotinamide. Positions 107 and 108 each coordinate nicotinamide. The Proton acceptor role is filled by His-123. 4 residues coordinate Zn(2+): Cys-131, Cys-134, Cys-151, and Cys-154. Residues Ser-192, Ser-193, Asn-215, and Asp-232 each contribute to the NAD(+) site.

This sequence belongs to the sirtuin family. Class U subfamily. Zn(2+) is required as a cofactor.

The protein localises to the cytoplasm. The catalysed reaction is N(6)-acetyl-L-lysyl-[protein] + NAD(+) + H2O = 2''-O-acetyl-ADP-D-ribose + nicotinamide + L-lysyl-[protein]. Functionally, NAD-dependent protein deacetylase which modulates the activities of several enzymes which are inactive in their acetylated form. This is NAD-dependent protein deacetylase from Staphylococcus aureus (strain Mu50 / ATCC 700699).